The sequence spans 111 residues: Type III endosome membrane protein TEMP (111 aa).

Residues 1-27 are Extracellular-facing; sequence MIGGNTTIISGAINASTEAPGLGTGGR. The N-linked (GlcNAc...) asparagine glycan is linked to Asn5. A helical; Signal-anchor for type III membrane protein membrane pass occupies residues 28–48; it reads AWPVLVGVVLGAVVLSILIAL. The Cytoplasmic segment spans residues 49–111; it reads AAKCHLCRRY…TTGSRDHFSL (63 aa). The segment at 64–111 is disordered; sequence HRPLSSAGGGNRPPVGEDEDDDGFIEDNYIQPGAGEMETTGSRDHFSL. Residues 79–88 are compositionally biased toward acidic residues; that stretch reads GEDEDDDGFI.

Expressed in stomach, kidney, large and small intestine and kidney.

The protein resides in the membrane. It is found in the early endosome. Its subcellular location is the recycling endosome. The protein localises to the cell membrane. Functionally, may be involved in membrane trafficking between endosomes and plasma membrane. The protein is Type III endosome membrane protein TEMP of Mus musculus (Mouse).